We begin with the raw amino-acid sequence, 442 residues long: ATP-dependent RNA helicase SUB2 (442 aa).

A Q motif motif is present at residues Thr59–Gln87. A Helicase ATP-binding domain is found at Ile90 to Val265. Residue Ala103 to Thr110 coordinates ATP. The DECD box motif lies at Asp212 to Asp215. In terms of domain architecture, Helicase C-terminal spans Lys293–Ser438.

Belongs to the DEAD box helicase family. DECD subfamily.

Its subcellular location is the nucleus. It catalyses the reaction ATP + H2O = ADP + phosphate + H(+). ATP-binding RNA helicase involved in transcription elongation and required for the export of mRNA out of the nucleus. SUB2 also plays a role in pre-mRNA splicing and spliceosome assembly. May be involved in rDNA and telomeric silencing, and maintenance of genome integrity. This is ATP-dependent RNA helicase SUB2 (SUB2) from Ajellomyces capsulatus (strain NAm1 / WU24) (Darling's disease fungus).